The chain runs to 185 residues: Elongation factor P (185 aa).

Belongs to the elongation factor P family.

The protein localises to the cytoplasm. It functions in the pathway protein biosynthesis; polypeptide chain elongation. Involved in peptide bond synthesis. Stimulates efficient translation and peptide-bond synthesis on native or reconstituted 70S ribosomes in vitro. Probably functions indirectly by altering the affinity of the ribosome for aminoacyl-tRNA, thus increasing their reactivity as acceptors for peptidyl transferase. In Moorella thermoacetica (strain ATCC 39073 / JCM 9320), this protein is Elongation factor P.